The chain runs to 114 residues: Cuticle protein AMP5 (114 aa).

Gln-1 is subject to Pyrrolidone carboxylic acid. In terms of domain architecture, Chitin-binding type R&amp;R spans Ala-18–Pro-83.

As to expression, arthrodial membrane.

This Homarus americanus (American lobster) protein is Cuticle protein AMP5.